The sequence spans 429 residues: 3-phosphoshikimate 1-carboxyvinyltransferase (429 aa).

3-phosphoshikimate is bound by residues Lys23, Ser24, and Arg28. Lys23 contacts phosphoenolpyruvate. Positions 97 and 125 each coordinate phosphoenolpyruvate. The 3-phosphoshikimate site is built by Ser170, Ser171, Gln172, Ser198, Asp314, Asn338, and Lys342. Gln172 is a phosphoenolpyruvate binding site. The active-site Proton acceptor is the Asp314. 3 residues coordinate phosphoenolpyruvate: Arg346, Arg388, and Lys413.

This sequence belongs to the EPSP synthase family. Monomer.

It is found in the cytoplasm. The catalysed reaction is 3-phosphoshikimate + phosphoenolpyruvate = 5-O-(1-carboxyvinyl)-3-phosphoshikimate + phosphate. The protein operates within metabolic intermediate biosynthesis; chorismate biosynthesis; chorismate from D-erythrose 4-phosphate and phosphoenolpyruvate: step 6/7. Catalyzes the transfer of the enolpyruvyl moiety of phosphoenolpyruvate (PEP) to the 5-hydroxyl of shikimate-3-phosphate (S3P) to produce enolpyruvyl shikimate-3-phosphate and inorganic phosphate. This Pectobacterium atrosepticum (strain SCRI 1043 / ATCC BAA-672) (Erwinia carotovora subsp. atroseptica) protein is 3-phosphoshikimate 1-carboxyvinyltransferase.